Here is a 413-residue protein sequence, read N- to C-terminus: 1-deoxy-D-xylulose 5-phosphate reductoisomerase (413 aa).

7 residues coordinate NADPH: T13, G14, S15, I16, K40, N41, and N127. K128 serves as a coordination point for 1-deoxy-D-xylulose 5-phosphate. E129 contributes to the NADPH binding site. D153 contacts Mn(2+). Residues S154, E155, S184, and H207 each coordinate 1-deoxy-D-xylulose 5-phosphate. Residue E155 participates in Mn(2+) binding. Position 213 (G213) interacts with NADPH. 1-deoxy-D-xylulose 5-phosphate-binding residues include S220, N225, K226, and E229. E229 provides a ligand contact to Mn(2+).

It belongs to the DXR family. Requires Mg(2+) as cofactor. The cofactor is Mn(2+).

It carries out the reaction 2-C-methyl-D-erythritol 4-phosphate + NADP(+) = 1-deoxy-D-xylulose 5-phosphate + NADPH + H(+). It participates in isoprenoid biosynthesis; isopentenyl diphosphate biosynthesis via DXP pathway; isopentenyl diphosphate from 1-deoxy-D-xylulose 5-phosphate: step 1/6. Its function is as follows. Catalyzes the NADPH-dependent rearrangement and reduction of 1-deoxy-D-xylulose-5-phosphate (DXP) to 2-C-methyl-D-erythritol 4-phosphate (MEP). The sequence is that of 1-deoxy-D-xylulose 5-phosphate reductoisomerase from Nitrosomonas eutropha (strain DSM 101675 / C91 / Nm57).